Reading from the N-terminus, the 435-residue chain is Serine carboxypeptidase-like 16 (435 aa).

Positions 1–23 (MGSWIPKLLLLQLVLLLTKHADS) are cleaved as a signal peptide. 3 disulfide bridges follow: Cys-82-Cys-325, Cys-246-Cys-260, and Cys-284-Cys-291. N-linked (GlcNAc...) asparagine glycosylation occurs at Asn-103. The active site involves Ser-178. The N-linked (GlcNAc...) asparagine glycan is linked to Asn-305. Asp-360 is an active-site residue. N-linked (GlcNAc...) asparagine glycosylation is present at Asn-376. His-413 is an active-site residue.

Belongs to the peptidase S10 family. As to expression, expressed in seedlings, roots and leaves.

The protein localises to the secreted. Functionally, probable carboxypeptidase. The sequence is that of Serine carboxypeptidase-like 16 (SCPL16) from Arabidopsis thaliana (Mouse-ear cress).